Reading from the N-terminus, the 606-residue chain is DNA mismatch repair protein MutL (606 aa).

The segment at 350–371 (GWRPSAPSAPWTPEASPSRPYQ) is disordered.

This sequence belongs to the DNA mismatch repair MutL/HexB family.

In terms of biological role, this protein is involved in the repair of mismatches in DNA. It is required for dam-dependent methyl-directed DNA mismatch repair. May act as a 'molecular matchmaker', a protein that promotes the formation of a stable complex between two or more DNA-binding proteins in an ATP-dependent manner without itself being part of a final effector complex. The protein is DNA mismatch repair protein MutL of Rhizobium rhizogenes (strain K84 / ATCC BAA-868) (Agrobacterium radiobacter).